Reading from the N-terminus, the 1029-residue chain is Ig-like and fibronectin type-III domain-containing protein 1 (1029 aa).

An N-terminal signal peptide occupies residues 1-22 (MCNVAEDPSSFSTITIATTCRA). The Extracellular segment spans residues 23-918 (EWPKVSPCIA…RRSASKGSSS (896 aa)). N-linked (GlcNAc...) asparagine glycans are attached at residues asparagine 36, asparagine 93, asparagine 120, and asparagine 165. The Fibronectin type-III 1 domain occupies 90–181 (APGNVTISEL…TAKLFSTLPT (92 aa)). One can recognise a WR1 domain in the interval 185–227 (PLCTIGEPIYMNDGRVMICDAVNPCPNGFRCTGAGSDLSYCCP). N-linked (GlcNAc...) asparagine glycosylation is found at asparagine 257, asparagine 374, asparagine 409, asparagine 442, asparagine 482, asparagine 507, and asparagine 552. Fibronectin type-III domains lie at 330–417 (AVRN…TKPA) and 427–523 (APEK…AQKD). The 92-residue stretch at 619-710 (ASVTMKKDKI…SRVEASSEVI (92 aa)) folds into the Ig-like C2-type domain. A disulfide bridge connects residues cysteine 640 and cysteine 693. N-linked (GlcNAc...) asparagine glycosylation occurs at asparagine 753. Residues 817-909 (APSEVSNVRI…SAIPKDSEPR (93 aa)) enclose the Fibronectin type-III 4 domain. A helical transmembrane segment spans residues 919–939 (AFWIVVILVVFGVLIAGLAVL). The Cytoplasmic segment spans residues 940-1029 (SKRRELPYPI…NGMRYAKLET (90 aa)). Positions 988 to 1021 (SATTGTAAATQSEWQSANLEANSTTDNSHEYRNG) are disordered. Polar residues predominate over residues 998 to 1013 (QSEWQSANLEANSTTD).

It is found in the cell membrane. The protein is Ig-like and fibronectin type-III domain-containing protein 1 of Caenorhabditis elegans.